Reading from the N-terminus, the 370-residue chain is Biotin synthase (370 aa).

Residues 50–276 (FSDGTVDACS…IAVYRFLHPE (227 aa)) enclose the Radical SAM core domain. [4Fe-4S] cluster is bound by residues Cys68, Cys72, and Cys75. Positions 208 and 280 each coordinate [2Fe-2S] cluster. Residues 328 to 370 (AGLEPNREANTFDPESVKARHRSPAAETASNANRTNATTETDD) form a disordered region. Positions 352–370 (AAETASNANRTNATTETDD) are enriched in low complexity.

Belongs to the radical SAM superfamily. Biotin synthase family. Homodimer. Requires [4Fe-4S] cluster as cofactor. The cofactor is [2Fe-2S] cluster.

The enzyme catalyses (4R,5S)-dethiobiotin + (sulfur carrier)-SH + 2 reduced [2Fe-2S]-[ferredoxin] + 2 S-adenosyl-L-methionine = (sulfur carrier)-H + biotin + 2 5'-deoxyadenosine + 2 L-methionine + 2 oxidized [2Fe-2S]-[ferredoxin]. It participates in cofactor biosynthesis; biotin biosynthesis; biotin from 7,8-diaminononanoate: step 2/2. Catalyzes the conversion of dethiobiotin (DTB) to biotin by the insertion of a sulfur atom into dethiobiotin via a radical-based mechanism. This Natronomonas pharaonis (strain ATCC 35678 / DSM 2160 / CIP 103997 / JCM 8858 / NBRC 14720 / NCIMB 2260 / Gabara) (Halobacterium pharaonis) protein is Biotin synthase.